The chain runs to 59 residues: Large ribosomal subunit protein bL32 (59 aa).

It belongs to the bacterial ribosomal protein bL32 family.

This is Large ribosomal subunit protein bL32 from Limosilactobacillus reuteri (strain DSM 20016) (Lactobacillus reuteri).